Consider the following 333-residue polypeptide: Transcription factor TGA2.2 (333 aa).

A compositionally biased stretch (polar residues) spans 1–14 (MADASSRTDTSTVL). The interval 1-48 (MADASSRTDTSTVLDTDDKNQMVDGQSGAIVPSNSSDRSDRSDKPMDQ) is disordered. The span at 37 to 48 (DRSDRSDKPMDQ) shows a compositional bias: basic and acidic residues. Residues 47–91 (DQKVLRRLAQNREAARKSRLRKKAYVQQLESSKLKLASLEQEINK) enclose the bZIP domain. Residues 49 to 69 (KVLRRLAQNREAARKSRLRKK) are basic motif. Residues 75–89 (LESSKLKLASLEQEI) form a leucine-zipper region. Residues 114–330 (AMTFDLEYAR…RALSSLWLAR (217 aa)) form the DOG1 domain.

Belongs to the bZIP family. In terms of assembly, interacts with NPR1/NH1. Interacts with NPR3/NH3.

The protein resides in the nucleus. Transcriptional regulator involved in defense response. In Oryza sativa subsp. japonica (Rice), this protein is Transcription factor TGA2.2.